Consider the following 304-residue polypeptide: MNSNDQDPIPFRPEDNNFSGSKTYAMSGKIMLSAIVILFFVVILMVFLHLYARWYLLRARRRHLRRRSRNRRATMVFFTADPSTAATSVVASRGLDPNVIKSLPVFTFSDETHKDPIECAVCLSEFEESETGRVLPNCQHTFHVDCIDMWFHSHSTCPLCRSLVESLAGIESTAAAREREVVIAVDSDPVLVIEPSSSSGLTDEPHGSGSSQMLREDSGRKPAAIEVPRRTFSEFEDELTRRDSPASQSFRSPMSRMLSFTRMLSRDRRSASSPIAGAPPLSPTLSCRIQMTESDIERGGEESR.

A helical transmembrane segment spans residues isoleucine 30–leucine 50. The segment at cysteine 119–arginine 161 adopts an RING-type; atypical zinc-finger fold. The interval glutamate 194–arginine 304 is disordered. A compositionally biased stretch (basic and acidic residues) spans valine 227–serine 244. Residues proline 283–glutamate 293 are compositionally biased toward polar residues. A compositionally biased stretch (basic and acidic residues) spans aspartate 295–arginine 304.

It belongs to the RING-type zinc finger family. ATL subfamily. In terms of tissue distribution, preferentially expressed around the apical meristem region.

The protein localises to the membrane. It catalyses the reaction S-ubiquitinyl-[E2 ubiquitin-conjugating enzyme]-L-cysteine + [acceptor protein]-L-lysine = [E2 ubiquitin-conjugating enzyme]-L-cysteine + N(6)-ubiquitinyl-[acceptor protein]-L-lysine.. The protein operates within protein modification; protein ubiquitination. In terms of biological role, may be involved in the early steps of the plant defense signaling pathway. This Arabidopsis thaliana (Mouse-ear cress) protein is RING-H2 finger protein ATL2 (ATL2).